Consider the following 322-residue polypeptide: Heat-inducible transcription repressor HrcA (322 aa).

This sequence belongs to the HrcA family.

Negative regulator of class I heat shock genes (grpE-dnaK-dnaJ and groELS operons). Prevents heat-shock induction of these operons. In Staphylococcus carnosus (strain TM300), this protein is Heat-inducible transcription repressor HrcA.